The sequence spans 248 residues: Ribosomal RNA small subunit methyltransferase J (248 aa).

S-adenosyl-L-methionine is bound by residues 98–99 (RD), 114–115 (ER), 150–151 (SS), and Asp-168.

This sequence belongs to the methyltransferase superfamily. RsmJ family.

Its subcellular location is the cytoplasm. It catalyses the reaction guanosine(1516) in 16S rRNA + S-adenosyl-L-methionine = N(2)-methylguanosine(1516) in 16S rRNA + S-adenosyl-L-homocysteine + H(+). Functionally, specifically methylates the guanosine in position 1516 of 16S rRNA. This is Ribosomal RNA small subunit methyltransferase J from Shewanella baltica (strain OS195).